The following is a 145-amino-acid chain: MIIAITEIMDLIPHRYPFLLVDRVLKIDPNKSITGIKNVTVNEPQFTGHFPTRPVMPGVLMVESMAQLAAILVAKSLDSTKNKEVFLMSIENTKFRRIVQPGDTMHIHSVIDQQRANVWKFSSKVMVECEIAAESKFTAMIKDKM.

H49 is an active-site residue.

The protein belongs to the thioester dehydratase family. FabZ subfamily.

It localises to the cytoplasm. It carries out the reaction a (3R)-hydroxyacyl-[ACP] = a (2E)-enoyl-[ACP] + H2O. Involved in unsaturated fatty acids biosynthesis. Catalyzes the dehydration of short chain beta-hydroxyacyl-ACPs and long chain saturated and unsaturated beta-hydroxyacyl-ACPs. This Rickettsia typhi (strain ATCC VR-144 / Wilmington) protein is 3-hydroxyacyl-[acyl-carrier-protein] dehydratase FabZ.